Reading from the N-terminus, the 402-residue chain is Probable tRNA pseudouridine synthase D (402 aa).

Catalysis depends on Asp-94, which acts as the Nucleophile. Residues 175–364 (YILNYYGTQR…PGTRRKLITK (190 aa)) enclose the TRUD domain.

The protein belongs to the pseudouridine synthase TruD family.

It catalyses the reaction uridine(13) in tRNA = pseudouridine(13) in tRNA. Could be responsible for synthesis of pseudouridine from uracil-13 in transfer RNAs. The sequence is that of Probable tRNA pseudouridine synthase D from Methanococcus aeolicus (strain ATCC BAA-1280 / DSM 17508 / OCM 812 / Nankai-3).